The sequence spans 251 residues: Ubiquinone/menaquinone biosynthesis C-methyltransferase UbiE (251 aa).

S-adenosyl-L-methionine-binding positions include Thr-74, Asp-95, and Asn-123–Ala-124.

This sequence belongs to the class I-like SAM-binding methyltransferase superfamily. MenG/UbiE family.

It catalyses the reaction a 2-demethylmenaquinol + S-adenosyl-L-methionine = a menaquinol + S-adenosyl-L-homocysteine + H(+). The enzyme catalyses a 2-methoxy-6-(all-trans-polyprenyl)benzene-1,4-diol + S-adenosyl-L-methionine = a 5-methoxy-2-methyl-3-(all-trans-polyprenyl)benzene-1,4-diol + S-adenosyl-L-homocysteine + H(+). It participates in quinol/quinone metabolism; menaquinone biosynthesis; menaquinol from 1,4-dihydroxy-2-naphthoate: step 2/2. The protein operates within cofactor biosynthesis; ubiquinone biosynthesis. Its function is as follows. Methyltransferase required for the conversion of demethylmenaquinol (DMKH2) to menaquinol (MKH2) and the conversion of 2-polyprenyl-6-methoxy-1,4-benzoquinol (DDMQH2) to 2-polyprenyl-3-methyl-6-methoxy-1,4-benzoquinol (DMQH2). In Pseudoalteromonas translucida (strain TAC 125), this protein is Ubiquinone/menaquinone biosynthesis C-methyltransferase UbiE.